A 356-amino-acid chain; its full sequence is NADH-quinone oxidoreductase subunit H (356 aa).

A run of 9 helical transmembrane segments spans residues 22–42, 59–79, 93–113, 124–144, 171–191, 198–218, 240–260, 285–305, and 321–341; these read GVVS…TAYL, PSLA…KLVF, FIIA…VIPI, IGGI…IIIA, MALS…IQIV, PIWL…SILA, VEYS…NMIL, IPGY…FLWI, and GLKV…TILV.

This sequence belongs to the complex I subunit 1 family. As to quaternary structure, NDH-1 is composed of 14 different subunits. Subunits NuoA, H, J, K, L, M, N constitute the membrane sector of the complex.

It is found in the cell inner membrane. It catalyses the reaction a quinone + NADH + 5 H(+)(in) = a quinol + NAD(+) + 4 H(+)(out). In terms of biological role, NDH-1 shuttles electrons from NADH, via FMN and iron-sulfur (Fe-S) centers, to quinones in the respiratory chain. The immediate electron acceptor for the enzyme in this species is believed to be ubiquinone. Couples the redox reaction to proton translocation (for every two electrons transferred, four hydrogen ions are translocated across the cytoplasmic membrane), and thus conserves the redox energy in a proton gradient. This subunit may bind ubiquinone. The chain is NADH-quinone oxidoreductase subunit H from Orientia tsutsugamushi (strain Boryong) (Rickettsia tsutsugamushi).